Here is a 257-residue protein sequence, read N- to C-terminus: Phosphate import ATP-binding protein PstB (257 aa).

The region spanning 5–246 is the ABC transporter domain; the sequence is LEIKDLTAFY…EVIFTSPKNE (242 aa). Position 37–44 (37–44) interacts with ATP; the sequence is GPSGCGKS.

This sequence belongs to the ABC transporter superfamily. Phosphate importer (TC 3.A.1.7) family. The complex is composed of two ATP-binding proteins (PstB), two transmembrane proteins (PstC and PstA) and a solute-binding protein (PstS).

The protein resides in the cell membrane. It carries out the reaction phosphate(out) + ATP + H2O = ADP + 2 phosphate(in) + H(+). In terms of biological role, part of the ABC transporter complex PstSACB involved in phosphate import. Responsible for energy coupling to the transport system. This chain is Phosphate import ATP-binding protein PstB, found in Tropheryma whipplei (strain Twist) (Whipple's bacillus).